Consider the following 515-residue polypeptide: Maturase K (515 aa).

This sequence belongs to the intron maturase 2 family. MatK subfamily.

Its subcellular location is the plastid. The protein resides in the chloroplast. Usually encoded in the trnK tRNA gene intron. Probably assists in splicing its own and other chloroplast group II introns. This is Maturase K from Pinus pinea (Italian stone pine).